A 114-amino-acid polypeptide reads, in one-letter code: Iron-sulfur cluster insertion protein ErpA (114 aa).

Positions 42, 106, and 108 each coordinate iron-sulfur cluster.

It belongs to the HesB/IscA family. As to quaternary structure, homodimer. It depends on iron-sulfur cluster as a cofactor.

Required for insertion of 4Fe-4S clusters for at least IspG. This chain is Iron-sulfur cluster insertion protein ErpA, found in Cronobacter sakazakii (strain ATCC BAA-894) (Enterobacter sakazakii).